The chain runs to 143 residues: Large ribosomal subunit protein uL15 (143 aa).

Residues 1-52 (MKLNTLAPAAGSKSAPKRLGRGIGSGLGKTSGKGHKGQKARSGGYHKVGFEG) form a disordered region. The segment covering 21–31 (RGIGSGLGKTS) has biased composition (gly residues).

The protein belongs to the universal ribosomal protein uL15 family. In terms of assembly, part of the 50S ribosomal subunit.

In terms of biological role, binds to the 23S rRNA. This is Large ribosomal subunit protein uL15 from Francisella tularensis subsp. novicida (strain U112).